Consider the following 84-residue polypeptide: Exodeoxyribonuclease 7 small subunit (84 aa).

It belongs to the XseB family. In terms of assembly, heterooligomer composed of large and small subunits.

The protein localises to the cytoplasm. It catalyses the reaction Exonucleolytic cleavage in either 5'- to 3'- or 3'- to 5'-direction to yield nucleoside 5'-phosphates.. Bidirectionally degrades single-stranded DNA into large acid-insoluble oligonucleotides, which are then degraded further into small acid-soluble oligonucleotides. The chain is Exodeoxyribonuclease 7 small subunit from Bartonella henselae (strain ATCC 49882 / DSM 28221 / CCUG 30454 / Houston 1) (Rochalimaea henselae).